Here is a 333-residue protein sequence, read N- to C-terminus: Homeobox protein HMX1 (333 aa).

Disordered stretches follow at residues 1-74 (MAQD…STSA), 86-109 (GTEG…APRC), and 139-204 (CASP…KKKT). Positions 17–30 (DYTQGNTDRSTAAA) are enriched in polar residues. Positions 87-105 (TEGGGGTRRAAAGGGGGRG) are enriched in gly residues. Residues 144–158 (TSDRDSPELPEDTER) are compositionally biased toward basic and acidic residues. Residues 159–176 (AGGGGRAAARGPAGGRQS) show a composition bias toward gly residues. Acidic residues predominate over residues 181–192 (EEEEERGEEAGE). The segment at residues 201–260 (KKKTRTVFSRSQVFQLESTFDVKRYLSSSERAGLAASLHLTETQVKIWFQNRRNKWKRQL) is a DNA-binding region (homeobox). An HMX family specific domain 1 motif is present at residues 261-271 (AADLEAANLSH).

Belongs to the HMX homeobox family.

Its subcellular location is the nucleus. In terms of biological role, DNA-binding protein that binds to the 5'-CAAG-3' core sequence. May function as a transcriptional repressor. Seems to act as a transcriptional antagonist of NKX2-5. May play an important role in the development of craniofacial structures such as the eye and ear. In Gallus gallus (Chicken), this protein is Homeobox protein HMX1 (HMX1).